The sequence spans 324 residues: Phospho-N-acetylmuramoyl-pentapeptide-transferase (324 aa).

10 helical membrane passes run 9–29 (TFAV…PFLV), 53–73 (TMGA…FSFI), 77–97 (VSAA…LGFL), 117–137 (FLGQ…NDFA), 147–167 (IEVD…VGFS), 176–196 (LDGL…VIAF), 201–221 (MDVA…LLFN), 227–247 (IFMG…ISIL), 253–273 (LLLL…LQVF), and 304–324 (VLTF…VVIF).

This sequence belongs to the glycosyltransferase 4 family. MraY subfamily. Mg(2+) is required as a cofactor.

The protein localises to the cell membrane. The catalysed reaction is UDP-N-acetyl-alpha-D-muramoyl-L-alanyl-gamma-D-glutamyl-meso-2,6-diaminopimeloyl-D-alanyl-D-alanine + di-trans,octa-cis-undecaprenyl phosphate = di-trans,octa-cis-undecaprenyl diphospho-N-acetyl-alpha-D-muramoyl-L-alanyl-D-glutamyl-meso-2,6-diaminopimeloyl-D-alanyl-D-alanine + UMP. It functions in the pathway cell wall biogenesis; peptidoglycan biosynthesis. Its function is as follows. Catalyzes the initial step of the lipid cycle reactions in the biosynthesis of the cell wall peptidoglycan: transfers peptidoglycan precursor phospho-MurNAc-pentapeptide from UDP-MurNAc-pentapeptide onto the lipid carrier undecaprenyl phosphate, yielding undecaprenyl-pyrophosphoryl-MurNAc-pentapeptide, known as lipid I. The chain is Phospho-N-acetylmuramoyl-pentapeptide-transferase from Listeria monocytogenes serovar 1/2a (strain ATCC BAA-679 / EGD-e).